A 353-amino-acid polypeptide reads, in one-letter code: Lipase-specific foldase (353 aa).

At 1 to 19 the chain is on the cytoplasmic side; that stretch reads MAQADRPARGGLAARPMRG. The helical transmembrane segment at 20–40 threads the bilayer; sequence ASFALAGLVACAACAAVVLWL. Residues 41 to 353 are Periplasmic-facing; that stretch reads RPAAPSPAPA…AASLDRGAGG (313 aa).

The protein belongs to the lipase chaperone family. Monomer. Interacts with lipase (lip).

The protein resides in the cell inner membrane. Its function is as follows. Involved in the folding of the extracellular lipase (lip) during its passage through the periplasm. In Burkholderia plantarii, this protein is Lipase-specific foldase.